The following is a 525-amino-acid chain: Peptide chain release factor 3 (525 aa).

The region spanning 11–279 (NKRRTFAIIS…TYLQFAPAPS (269 aa)) is the tr-type G domain. GTP-binding positions include 20–27 (SHPDAGKT), 88–92 (DTPGH), and 142–145 (NKFD).

This sequence belongs to the TRAFAC class translation factor GTPase superfamily. Classic translation factor GTPase family. PrfC subfamily.

Its subcellular location is the cytoplasm. Its function is as follows. Increases the formation of ribosomal termination complexes and stimulates activities of RF-1 and RF-2. It binds guanine nucleotides and has strong preference for UGA stop codons. It may interact directly with the ribosome. The stimulation of RF-1 and RF-2 is significantly reduced by GTP and GDP, but not by GMP. This is Peptide chain release factor 3 from Limosilactobacillus reuteri (strain DSM 20016) (Lactobacillus reuteri).